Reading from the N-terminus, the 307-residue chain is Sex-lethal homolog (307 aa).

RRM domains lie at 85–163 (TNLI…YARP) and 171–251 (TNLY…LAEE). The span at 285 to 299 (HRGRHNKNRNQKPHP) shows a compositional bias: basic residues. A disordered region spans residues 285–307 (HRGRHNKNRNQKPHPYHNPQKFI).

Its subcellular location is the nucleus. In terms of biological role, unknown; apparently not involved in somatic sex determination. In Chrysomya rufifacies (Hairy maggot blowfly), this protein is Sex-lethal homolog (SXL).